Reading from the N-terminus, the 436-residue chain is Indole-3-acetyl-aspartic acid hydrolase (436 aa).

It belongs to the peptidase M20 family. As to quaternary structure, monomer.

It catalyses the reaction (indol-3-yl)acetyl-L-aspartate + H2O = (indol-3-yl)acetate + L-aspartate. Hydrolyzes indole-3-acetyl-aspartate (IAA-Asp) to indole-3-acetic acid (IAA). Shows an exclusively high substrate specificity for IAA-Asp. The sequence is that of Indole-3-acetyl-aspartic acid hydrolase from Enterobacter agglomerans (Erwinia herbicola).